A 443-amino-acid polypeptide reads, in one-letter code: Glycerol-3-phosphate acyltransferase 3-like (443 aa).

The next 3 helical transmembrane spans lie at 15 to 35 (WFSCVIVLIMLPAMFGISLGI), 146 to 166 (ISLRLTVLWVVGVVVRYCILL), and 170 to 190 (ITLTTIGLTWLVIGTTTVGFL). Positions 238-243 (HTSPID) match the HXXXXD motif motif. A helical membrane pass occupies residues 358-378 (IMSYLLRMMTSWAIVCNVWYL).

The protein belongs to the 1-acyl-sn-glycerol-3-phosphate acyltransferase family.

The protein localises to the endoplasmic reticulum membrane. The catalysed reaction is sn-glycerol 3-phosphate + an acyl-CoA = a 1-acyl-sn-glycero-3-phosphate + CoA. It carries out the reaction a 1-acyl-sn-glycero-3-phosphate + an acyl-CoA = a 1,2-diacyl-sn-glycero-3-phosphate + CoA. It functions in the pathway glycerolipid metabolism; triacylglycerol biosynthesis. It participates in phospholipid metabolism; CDP-diacylglycerol biosynthesis; CDP-diacylglycerol from sn-glycerol 3-phosphate: step 1/3. May transfer the acyl-group from acyl-coA to the sn-1 position of glycerol-3-phosphate, an essential step in glycerolipid biosynthesis. Also transfers the acyl-group from acyl-coA to the sn-2 position of 1-acyl-sn-glycerol-3-phosphate (lysophosphatidic acid, or LPA), forming 1,2-diacyl-sn-glycerol-3-phosphate (phosphatidic acid, or PA). The protein is Glycerol-3-phosphate acyltransferase 3-like (agpat9l) of Danio rerio (Zebrafish).